We begin with the raw amino-acid sequence, 447 residues long: N-succinylarginine dihydrolase (447 aa).

Substrate is bound by residues 19–28, asparagine 110, and 137–138; these read AGLSFGNEAS and HR. Residue glutamate 174 is part of the active site. Residue arginine 212 participates in substrate binding. The active site involves histidine 248. Residues aspartate 250 and asparagine 359 each contribute to the substrate site. The active-site Nucleophile is the cysteine 365.

This sequence belongs to the succinylarginine dihydrolase family. Homodimer.

The enzyme catalyses N(2)-succinyl-L-arginine + 2 H2O + 2 H(+) = N(2)-succinyl-L-ornithine + 2 NH4(+) + CO2. The protein operates within amino-acid degradation; L-arginine degradation via AST pathway; L-glutamate and succinate from L-arginine: step 2/5. In terms of biological role, catalyzes the hydrolysis of N(2)-succinylarginine into N(2)-succinylornithine, ammonia and CO(2). The protein is N-succinylarginine dihydrolase of Escherichia coli O7:K1 (strain IAI39 / ExPEC).